The chain runs to 206 residues: Flavin prenyltransferase UbiX (206 aa).

FMN contacts are provided by residues 14 to 16, T40, 101 to 104, and R136; these read GAS and SMGT. Dimethylallyl phosphate contacts are provided by Y166 and K182.

Belongs to the UbiX/PAD1 family.

The enzyme catalyses dimethylallyl phosphate + FMNH2 = prenylated FMNH2 + phosphate. Its function is as follows. Flavin prenyltransferase that catalyzes the synthesis of the prenylated FMN cofactor (prenyl-FMN) for 4-hydroxy-3-polyprenylbenzoic acid decarboxylase UbiD. The prenyltransferase is metal-independent and links a dimethylallyl moiety from dimethylallyl monophosphate (DMAP) to the flavin N5 and C6 atoms of FMN. The protein is Flavin prenyltransferase UbiX of Halalkalibacterium halodurans (strain ATCC BAA-125 / DSM 18197 / FERM 7344 / JCM 9153 / C-125) (Bacillus halodurans).